Reading from the N-terminus, the 338-residue chain is MESGKTTIAKIIKRNEPGGRVPIWLMRQAGRSLPEYRKAVENMNNFMEICYNTDLVTELTLQPVTRFDMDAAIIFSDILIIADVLGCDVNFVRGVGPIIKPVESPKELKGPQEIETKTLPILNAIKKVRSQLPKEKSLIGFAGGPWTVASYIIEGGSSKTFSKVLNFYPSCLKEIIERITEVTIIYLIKQIEFGADVIQLFDSNAGALSEPLFKEYVIEPTKRIILAIKDRFSDFPIIGFPRSAGNLYKDYCEQTGVSAVSIDYNVPIKWAKANLNIPLQGNLDPNLLAYNKTEAIKEAKRIIDCFRDLPFIFNLGHGVLPDTPVENIAALVNLVKSY.

Residues 27–31 (RQAGR), D77, Y151, S203, and H317 contribute to the substrate site.

This sequence belongs to the uroporphyrinogen decarboxylase family. As to quaternary structure, homodimer.

Its subcellular location is the cytoplasm. It carries out the reaction uroporphyrinogen III + 4 H(+) = coproporphyrinogen III + 4 CO2. It participates in porphyrin-containing compound metabolism; protoporphyrin-IX biosynthesis; coproporphyrinogen-III from 5-aminolevulinate: step 4/4. In terms of biological role, catalyzes the decarboxylation of four acetate groups of uroporphyrinogen-III to yield coproporphyrinogen-III. The polypeptide is Uroporphyrinogen decarboxylase (Wolbachia sp. subsp. Drosophila simulans (strain wRi)).